Consider the following 179-residue polypeptide: Interleukin-22 (179 aa).

The signal sequence occupies residues 1–33 (MAALQKSVSSFLMGTLATSCLLLLALLVQGGAA). Disulfide bonds link Cys40–Cys132 and Cys89–Cys178. Residues Asn54, Asn68, and Asn97 are each glycosylated (N-linked (GlcNAc...) asparagine).

The protein belongs to the IL-10 family.

The protein resides in the secreted. In terms of biological role, cytokine that plays a critical role in modulating tissue responses during inflammation. Plays an essential role in the regeneration of epithelial cells to maintain barrier function after injury and for the prevention of further tissue damage. Unlike most of the cytokines, has no effect on immune cells. Signals through a heterodimeric receptor composed of two subunits, the specific receptor IL22RA1 which is present on non-immune cells in many organs and the shared subunit IL10RB. Ligation of IL22RA1 with IL22 induces activation of the tyrosine kinases JAK1 and TYK2, which in turn activates STAT3. In turn, promotes cell survival and proliferation through STAT3, ERK1/2 and PI3K/AKT pathways. Promotes phosphorylation of GSK3B at 'Ser-9' and CTTN. Promotes epithelial cell spreading. The protein is Interleukin-22 (IL22) of Homo sapiens (Human).